A 467-amino-acid chain; its full sequence is Gamma-aminobutyric acid receptor subunit gamma-3 (467 aa).

Residues 1 to 17 (MAAKLLLLLCLFSGLHA) form the signal peptide. At 18–256 (RSRRVEEDEN…FELSRRMGYF (239 aa)) the chain is on the extracellular side. N-linked (GlcNAc...) asparagine glycosylation occurs at N110. The cysteines at positions 171 and 185 are disulfide-linked. Residue N228 is glycosylated (N-linked (GlcNAc...) asparagine). Residues 257-277 (TIQTYIPCILTVVLSWVSFWI) traverse the membrane as a helical segment. The Cytoplasmic portion of the chain corresponds to 278 to 283 (KKDATP). The helical transmembrane segment at 284–303 (ARTTLGITTVLTMTTLSTIA) threads the bilayer. Residues 304 to 311 (RKSLPRVS) are Extracellular-facing. The helical transmembrane segment at 312–332 (YVTAMDLFVTVCFLFVFAALM) threads the bilayer. Over 333 to 446 (EYATLNYYSS…DVSELDSYSR (114 aa)) the chain is Cytoplasmic. Residues 447–467 (VFFPTSFLLFNLVYWVGYLYL) form a helical membrane-spanning segment.

Belongs to the ligand-gated ion channel (TC 1.A.9) family. Gamma-aminobutyric acid receptor (TC 1.A.9.5) subfamily. GABRG3 sub-subfamily. As to quaternary structure, heteropentamer, formed by a combination of alpha (GABRA1-6), beta (GABRB1-3), gamma (GABRG1-3), delta (GABRD), epsilon (GABRE), rho (GABRR1-3), pi (GABRP) and theta (GABRQ) chains, each subunit exhibiting distinct physiological and pharmacological properties. In terms of processing, may be palmitoylated. As to expression, expressed in brain.

It localises to the postsynaptic cell membrane. Its subcellular location is the cell membrane. The catalysed reaction is chloride(in) = chloride(out). Gamma subunit of the heteropentameric ligand-gated chloride channel gated by gamma-aminobutyric acid (GABA), a major inhibitory neurotransmitter in the brain. GABA-gated chloride channels, also named GABA(A) receptors (GABAAR), consist of five subunits arranged around a central pore and contain GABA active binding site(s) located at the alpha and beta subunit interface(s). When activated by GABA, GABAARs selectively allow the flow of chloride across the cell membrane down their electrochemical gradient. The protein is Gamma-aminobutyric acid receptor subunit gamma-3 of Mus musculus (Mouse).